Consider the following 474-residue polypeptide: Ribulose bisphosphate carboxylase large chain (474 aa).

Substrate is bound by residues asparagine 122 and threonine 172. The Proton acceptor role is filled by lysine 174. Residue lysine 176 participates in substrate binding. Residues lysine 200, aspartate 202, and glutamate 203 each contribute to the Mg(2+) site. Lysine 200 bears the N6-carboxylysine mark. Histidine 293 serves as the catalytic Proton acceptor. Residues arginine 294, histidine 326, and serine 378 each coordinate substrate.

It belongs to the RuBisCO large chain family. Type I subfamily. As to quaternary structure, heterohexadecamer of 8 large chains and 8 small chains; disulfide-linked. The disulfide link is formed within the large subunit homodimers. The cofactor is Mg(2+). In terms of processing, the disulfide bond which can form in the large chain dimeric partners within the hexadecamer appears to be associated with oxidative stress and protein turnover.

Its subcellular location is the carboxysome. It catalyses the reaction 2 (2R)-3-phosphoglycerate + 2 H(+) = D-ribulose 1,5-bisphosphate + CO2 + H2O. It carries out the reaction D-ribulose 1,5-bisphosphate + O2 = 2-phosphoglycolate + (2R)-3-phosphoglycerate + 2 H(+). RuBisCO catalyzes two reactions: the carboxylation of D-ribulose 1,5-bisphosphate, the primary event in carbon dioxide fixation, as well as the oxidative fragmentation of the pentose substrate in the photorespiration process. Both reactions occur simultaneously and in competition at the same active site. This is Ribulose bisphosphate carboxylase large chain from Gloeobacter violaceus (strain ATCC 29082 / PCC 7421).